A 122-amino-acid chain; its full sequence is Large ribosomal subunit protein uL14 (122 aa).

The protein belongs to the universal ribosomal protein uL14 family. As to quaternary structure, part of the 50S ribosomal subunit. Forms a cluster with proteins L3 and L19. In the 70S ribosome, L14 and L19 interact and together make contacts with the 16S rRNA in bridges B5 and B8.

In terms of biological role, binds to 23S rRNA. Forms part of two intersubunit bridges in the 70S ribosome. The chain is Large ribosomal subunit protein uL14 from Staphylococcus haemolyticus (strain JCSC1435).